Reading from the N-terminus, the 584-residue chain is Transcription factor COE1 (584 aa).

M1 is subject to N-acetylmethionine. Polar residues predominate over residues M1–S14. The segment at M1–G21 is disordered. K16 participates in a covalent cross-link: Glycyl lysine isopeptide (Lys-Gly) (interchain with G-Cter in SUMO1); alternate. Residue K16 forms a Glycyl lysine isopeptide (Lys-Gly) (interchain with G-Cter in SUMO2); alternate linkage. Positions R63 to N66 are interaction with DNA. The C5-type zinc finger occupies C151–C170. Interaction with DNA stretches follow at residues N197 to N204 and N236 to K239. The region spanning P255–T338 is the IPT/TIG domain. A disordered region spans residues G450–N473.

The protein belongs to the COE family. Homodimer. Interacts with ZNF423 and ZNF521, leading to prevent EBF1 to bind DNA and activate target genes. Interacts with CCR4-NOT component CNOT3. Expressed exclusively in olfactory receptor neurons and their precursors.

It is found in the nucleus. Its function is as follows. Key pioneer transcription factor of B-cell specification and commitment. Recognizes variations of the palindromic sequence 5'-ATTCCCNNGGGAATT-3'. Operates in a transcription factor network to activate B-cell-specific genes and repress genes associated with alternative cell fates. For instance, positively regulates many B-cell specific genes including BCR or CD40 while repressing genes that direct cells into alternative lineages, including GATA3 and TCF7 for the T-cell lineage. In addition to its role during lymphopoiesis, controls the thermogenic gene program in adipocytes during development and in response to environmental cold. This is Transcription factor COE1 (Ebf1) from Rattus norvegicus (Rat).